A 379-amino-acid polypeptide reads, in one-letter code: Chaperone protein DnaJ (379 aa).

The J domain maps to 5-70 (DYYEILEVSR…EKRAAYDRYG (66 aa)). The segment at 135–213 (GIKVPISYVT…CGGSGRVRNE (79 aa)) adopts a CR-type zinc-finger fold. Cys-148, Cys-151, Cys-165, Cys-168, Cys-187, Cys-190, Cys-201, and Cys-204 together coordinate Zn(2+). CXXCXGXG motif repeat units follow at residues 148-155 (CSSCSGIG), 165-172 (CGNCNGAG), 187-194 (CNVCNGEG), and 201-208 (CRRCGGSG).

Belongs to the DnaJ family. Homodimer. Zn(2+) serves as cofactor.

It localises to the cytoplasm. In terms of biological role, participates actively in the response to hyperosmotic and heat shock by preventing the aggregation of stress-denatured proteins and by disaggregating proteins, also in an autonomous, DnaK-independent fashion. Unfolded proteins bind initially to DnaJ; upon interaction with the DnaJ-bound protein, DnaK hydrolyzes its bound ATP, resulting in the formation of a stable complex. GrpE releases ADP from DnaK; ATP binding to DnaK triggers the release of the substrate protein, thus completing the reaction cycle. Several rounds of ATP-dependent interactions between DnaJ, DnaK and GrpE are required for fully efficient folding. Also involved, together with DnaK and GrpE, in the DNA replication of plasmids through activation of initiation proteins. The polypeptide is Chaperone protein DnaJ (Anaplasma marginale (strain Florida)).